A 432-amino-acid chain; its full sequence is uncharacterized protein (432 aa).

Transmembrane regions (helical) follow at residues 35–55, 60–80, 112–132, 144–164, 185–205, 209–229, 242–262, 274–294, 313–333, 359–379, 384–404, and 408–428; these read VARV…VIYL, LPPA…IATG, VAGM…PLWS, VGLL…LGAL, LAVA…LWAA, AVAW…ASLL, AHSI…PVLL, GAVI…LSAM, LIAP…AAGL, AAAV…AAAL, LLGW…PMPL, and TVIA…AALA.

The protein to M.tuberculosis Rv3630 and M.bovis Mb3654.

The protein resides in the cell membrane. This is an uncharacterized protein from Mycobacterium tuberculosis (strain CDC 1551 / Oshkosh).